The sequence spans 308 residues: Mitochondrial import receptor subunit TOM40B (308 aa).

Residues Met-1–Ser-29 are disordered. Residues Pro-281–Gly-308 are required for mitochondrial targeting.

The protein belongs to the Tom40 family. Forms part of the preprotein translocase of the outer mitochondrial membrane (TOM complex) containing TOMM22, TOMM40, TOMM40L and TOMM70. Interacts with mitochondrial targeting sequences.

It is found in the mitochondrion outer membrane. Its function is as follows. Potential channel-forming protein implicated in import of protein precursors into mitochondria. In Homo sapiens (Human), this protein is Mitochondrial import receptor subunit TOM40B (TOMM40L).